A 408-amino-acid polypeptide reads, in one-letter code: Glyceraldehyde-3-phosphate dehydrogenase, testis-specific (408 aa).

Positions 1–73 are testis-specific N-terminal extension; sequence MSKRDIVLTN…TPPPKMVSVA (73 aa). The interval 19–68 is disordered; it reads QPCPVTRAPPPPEPKAEVEPQPQPEPTPVREEIKPPPPPLPPHPATPPPK. Positions 53–68 are enriched in pro residues; it reads PPPPPLPPHPATPPPK. NAD(+) contacts are provided by residues 85–86, Asp106, Lys151, Tyr173, and Ser193; that span reads RI. D-glyceraldehyde 3-phosphate is bound by residues 223–225, Thr254, 283–284, and Arg306; these read SCT and TG. Cys224 functions as the Nucleophile in the catalytic mechanism. Asn388 is an NAD(+) binding site.

It belongs to the glyceraldehyde-3-phosphate dehydrogenase family. In terms of assembly, homotetramer. Interacts with ARRB2; the interaction is detected in the nucleus upon OR1D2 stimulation. As to expression, testis specific.

The protein localises to the cytoplasm. It carries out the reaction D-glyceraldehyde 3-phosphate + phosphate + NAD(+) = (2R)-3-phospho-glyceroyl phosphate + NADH + H(+). It functions in the pathway carbohydrate degradation; glycolysis; pyruvate from D-glyceraldehyde 3-phosphate: step 1/5. May play an important role in regulating the switch between different pathways for energy production during spermiogenesis and in the spermatozoon. Required for sperm motility and male fertility. This is Glyceraldehyde-3-phosphate dehydrogenase, testis-specific (GAPDHS) from Homo sapiens (Human).